The following is a 452-amino-acid chain: Retinoid-inducible serine carboxypeptidase (452 aa).

The signal sequence occupies residues 1–26; sequence MELALRRSPVPRWLLLLPLLLGLNAG. N-linked (GlcNAc...) asparagine glycosylation is found at asparagine 64 and asparagine 126. Residue serine 167 is part of the active site. Residue asparagine 362 is glycosylated (N-linked (GlcNAc...) asparagine). Residues aspartate 371 and histidine 431 contribute to the active site.

It belongs to the peptidase S10 family.

The protein resides in the secreted. Its function is as follows. May be involved in vascular wall and kidney homeostasis. This chain is Retinoid-inducible serine carboxypeptidase (SCPEP1), found in Homo sapiens (Human).